The chain runs to 113 residues: MNNTLSKRLCLTAMLTLAAVVYTTSAFAETSKLVIESGDSAQSRQEAAMEKEQWNDTRSLRQKVNTRAEKEWDKADAAFDNRDKCEQSANINAYWEPNTLRCLDRRTGRVITP.

The signal sequence occupies residues 1–28 (MNNTLSKRLCLTAMLTLAAVVYTTSAFA).

Belongs to the UPF0482 family.

The chain is UPF0482 protein YnfB from Salmonella agona (strain SL483).